The sequence spans 120 residues: uncharacterized protein (120 aa).

Residues 93 to 109 form a helical membrane-spanning segment; the sequence is LCVGISTTMIIQVLFLL.

It localises to the membrane. This is an uncharacterized protein from Saccharomyces cerevisiae (strain ATCC 204508 / S288c) (Baker's yeast).